Here is a 349-residue protein sequence, read N- to C-terminus: tRNA pseudouridine synthase D (349 aa).

Residue Phe-27 coordinates substrate. Asp-80 acts as the Nucleophile in catalysis. A substrate-binding site is contributed by Asn-129. A TRUD domain is found at 155–303 (GVPNYFGAQR…VEAARRAMLL (149 aa)). Phe-329 contacts substrate.

This sequence belongs to the pseudouridine synthase TruD family.

The catalysed reaction is uridine(13) in tRNA = pseudouridine(13) in tRNA. Responsible for synthesis of pseudouridine from uracil-13 in transfer RNAs. The protein is tRNA pseudouridine synthase D of Enterobacter sp. (strain 638).